A 462-amino-acid chain; its full sequence is Trigger factor (462 aa).

Residues 163–259 (TDYVNIDLQR…VNDVKRRDLP (97 aa)) form the PPIase FKBP-type domain. The tract at residues 439–462 (SREEFEEEMQQQQQQQAQRQRMAP) is disordered. Positions 448 to 462 (QQQQQQQAQRQRMAP) are enriched in low complexity.

This sequence belongs to the FKBP-type PPIase family. Tig subfamily.

Its subcellular location is the cytoplasm. It carries out the reaction [protein]-peptidylproline (omega=180) = [protein]-peptidylproline (omega=0). Involved in protein export. Acts as a chaperone by maintaining the newly synthesized protein in an open conformation. Functions as a peptidyl-prolyl cis-trans isomerase. The polypeptide is Trigger factor (Salinibacter ruber (strain DSM 13855 / M31)).